Reading from the N-terminus, the 193-residue chain is Rho-related GTP-binding protein RhoA-D (193 aa).

GTP contacts are provided by residues 12–19 (GDGACGKT), 30–37 (FPEVYVPT), 59–63 (DTAGQ), 117–120 (NKKD), and 160–162 (SAK). Y34 carries a (Microbial infection) O-linked (GlcNAc) tyrosine; by Yersinia Afp18 glycan. C190 is subject to Cysteine methyl ester. Residue C190 is the site of S-geranylgeranyl cysteine attachment. Positions 191 to 193 (LLL) are cleaved as a propeptide — removed in mature form.

It belongs to the small GTPase superfamily. Rho family. Post-translationally, (Microbial infection) Glycosylated at Tyr-34 by Yersinia ruckeri toxin Afp18. Mono-O-GlcNAcylation by Afp18 inhibits RhoA activation by guanine nucleotide exchange factors and blocks RhoA signaling.

The protein resides in the cell membrane. Functionally, regulates a signal transduction pathway linking plasma membrane receptors to the assembly of focal adhesions and actin stress fibers. This Danio rerio (Zebrafish) protein is Rho-related GTP-binding protein RhoA-D.